Here is a 147-residue protein sequence, read N- to C-terminus: Hemoglobin subunit gamma-1 (147 aa).

Positions 3 to 147 constitute a Globin domain; sequence NFTAEDKAAI…VASALGSRYH (145 aa). Thr-13 is modified (phosphothreonine). Phosphoserine is present on residues Ser-45, Ser-51, and Ser-53. N6-acetyllysine is present on Lys-60. His-64 lines the heme b pocket. Position 83 is an N6-acetyllysine (Lys-83). His-93 serves as a coordination point for heme b. At Cys-94 the chain carries S-nitrosocysteine. Ser-140 carries the post-translational modification Phosphoserine.

It belongs to the globin family. In terms of assembly, heterotetramer of two alpha chains and two gamma chains in fetal hemoglobin (Hb F). Red blood cells.

Its function is as follows. Gamma chains make up the fetal hemoglobin F, in combination with alpha chains. This chain is Hemoglobin subunit gamma-1 (HBG1), found in Plecturocebus moloch (Dusky titi monkey).